Consider the following 407-residue polypeptide: Methyltransferase/ribosomally synthesized type I borosin cyclic peptide precursor ceuMA2 (407 aa).

The tract at residues 1–246 (MATTKTGSLT…TTSTLYIPPR (246 aa)) is methyltransferase domain. Catalysis depends on residues arginine 70, tyrosine 74, and tyrosine 96. Positions 96, 98, 101, 128, 170, 208, 239, and 240 each coordinate S-adenosyl-L-methionine. The interval 247–370 (EIAPVDQRIM…GPVYKVMRAT (124 aa)) is clasp domain. The segment at 371-393 (PAAIAAGQEHSLDEIAGSADSES) is precursor leader. N-methylthreonine is present on residues threonine 399 and threonine 400. An N-methylisoleucine modification is found at isoleucine 401. Residues valine 402 and valine 403 each carry the N-methylvaline modification. Isoleucine 404 is modified (N-methylisoleucine). Valine 405 carries the N-methylvaline modification. At histidine 406 the chain carries N-methylhistidine.

This sequence in the N-terminal section; belongs to the precorrin methyltransferase family. As to quaternary structure, homodimer. In terms of processing, ceuMA2 automethylates at Thr-399, Thr-400, Ile-401, Val-402, Val-403, Ile-404, Val-405 and His-406 before being processed by a prolyloligopeptidase which likely forms a peptidyl ester upon removal of the follower propeptide, which then undergoes macrocyclization with the N-terminus of the modified core peptide. Peptide backbone alpha-N-methylations change the physicochemical properties of amide bonds to provide structural constraints and other favorable characteristics including biological membrane permeability to peptides.

It participates in secondary metabolite biosynthesis. Fusion protein of the methyltransferase ceuM2 and a type I borosin core peptide; part of the gene cluster that mediates the biosynthesis of a type I borosin, a highly methylated cyclic peptide with potent biological activities. Type I borosins derive from the C-terminus of the fusion protein, and it is the same protein that methylates its own C-terminus using S-adenosyl methionine (SAM). The C-terminus is subsequently cleaved off and macrocyclized by a prolyloligopeptidase to give the final product. The polypeptide is Methyltransferase/ribosomally synthesized type I borosin cyclic peptide precursor ceuMA2 (Cerrena unicolor (Canker rot fungus)).